Consider the following 208-residue polypeptide: Kininogen-1b (208 aa).

A signal peptide spans 1–23 (MRLWFCLSFFIVLCLEHFPETLA). Residues 27 to 44 (NVPESEEKTEQYLRDLPK) show a composition bias toward basic and acidic residues. Positions 27–208 (NVPESEEKTE…RGKFHSQSHV (182 aa)) are disordered.

The protein belongs to the bradykinin-related peptide family. As to expression, expressed by the skin glands.

It is found in the secreted. In terms of biological role, in vitro, produces constriction of guinea pig ileum smooth muscle. May target bradykinin receptors (BDKRB). This is Kininogen-1b from Bombina maxima (Giant fire-bellied toad).